The following is a 334-amino-acid chain: Fructose-1,6-bisphosphatase class 1 (334 aa).

Residues Glu-90, Asp-113, Leu-115, and Asp-116 each contribute to the Mg(2+) site. Residues 116-119 (DGSS), Asn-209, Tyr-242, and Lys-272 contribute to the substrate site. Residue Glu-278 coordinates Mg(2+).

Belongs to the FBPase class 1 family. Homotetramer. It depends on Mg(2+) as a cofactor.

The protein resides in the cytoplasm. It carries out the reaction beta-D-fructose 1,6-bisphosphate + H2O = beta-D-fructose 6-phosphate + phosphate. It functions in the pathway carbohydrate biosynthesis; gluconeogenesis. The chain is Fructose-1,6-bisphosphatase class 1 from Actinobacillus pleuropneumoniae serotype 5b (strain L20).